Reading from the N-terminus, the 29-residue chain is Photosystem I reaction center subunit XII (29 aa).

Residues 7-24 (FVALLLALVPAVLAYRLG) form a helical membrane-spanning segment.

It belongs to the PsaM family.

Its subcellular location is the cellular thylakoid membrane. The protein is Photosystem I reaction center subunit XII of Synechococcus sp. (strain ATCC 27144 / PCC 6301 / SAUG 1402/1) (Anacystis nidulans).